Reading from the N-terminus, the 311-residue chain is Probable deoxyhypusine synthase (311 aa).

The active-site Nucleophile is the K284.

This sequence belongs to the deoxyhypusine synthase family. The cofactor is NAD(+).

It carries out the reaction [eIF5A protein]-L-lysine + spermidine = [eIF5A protein]-deoxyhypusine + propane-1,3-diamine. Its pathway is protein modification; eIF5A hypusination. Catalyzes the NAD-dependent oxidative cleavage of spermidine and the subsequent transfer of the butylamine moiety of spermidine to the epsilon-amino group of a specific lysine residue of the eIF-5A precursor protein to form the intermediate deoxyhypusine residue. This Picrophilus torridus (strain ATCC 700027 / DSM 9790 / JCM 10055 / NBRC 100828 / KAW 2/3) protein is Probable deoxyhypusine synthase.